Here is a 648-residue protein sequence, read N- to C-terminus: Serine/threonine-protein phosphatase 1 regulatory subunit PIG1 (648 aa).

The segment covering 20–51 (STSSFVSSTTSNSFSPLEDSTSASSSTSSSSS) has biased composition (low complexity). Positions 20 to 52 (STSSFVSSTTSNSFSPLEDSTSASSSTSSSSSG) are disordered. Residues 201 to 331 (HSLELSDPVS…NNDYKNYEIT (131 aa)) form the CBM21 domain. Over residues 593–609 (RESSSPEISPLNTTTSL) the composition is skewed to polar residues. The disordered stretch occupies residues 593–629 (RESSSPEISPLNTTTSLPFFPGDNMSDSSGEYEERTS).

Functionally, regulates the activity of glycogen synthase. It is most probably a regulatory subunit for protein phosphatase type 1. In Saccharomyces cerevisiae (strain ATCC 204508 / S288c) (Baker's yeast), this protein is Serine/threonine-protein phosphatase 1 regulatory subunit PIG1 (PIG1).